Here is a 474-residue protein sequence, read N- to C-terminus: UDP-N-acetylmuramate--L-alanine ligase (474 aa).

123–129 (GTHGKTT) is an ATP binding site.

Belongs to the MurCDEF family.

Its subcellular location is the cytoplasm. The enzyme catalyses UDP-N-acetyl-alpha-D-muramate + L-alanine + ATP = UDP-N-acetyl-alpha-D-muramoyl-L-alanine + ADP + phosphate + H(+). The protein operates within cell wall biogenesis; peptidoglycan biosynthesis. Functionally, cell wall formation. This chain is UDP-N-acetylmuramate--L-alanine ligase, found in Alcanivorax borkumensis (strain ATCC 700651 / DSM 11573 / NCIMB 13689 / SK2).